We begin with the raw amino-acid sequence, 921 residues long: Isoleucine--tRNA ligase (921 aa).

The 'HIGH' region motif lies at 57–67; that stretch reads PYANGELHMGH. Position 552 (Glu552) interacts with L-isoleucyl-5'-AMP. The 'KMSKS' region motif lies at 593-597; sequence KMSKS. Lys596 is a binding site for ATP. 4 residues coordinate Zn(2+): Cys888, Cys891, Cys908, and Cys911.

This sequence belongs to the class-I aminoacyl-tRNA synthetase family. IleS type 1 subfamily. As to quaternary structure, monomer. The cofactor is Zn(2+).

It is found in the cytoplasm. The enzyme catalyses tRNA(Ile) + L-isoleucine + ATP = L-isoleucyl-tRNA(Ile) + AMP + diphosphate. Functionally, catalyzes the attachment of isoleucine to tRNA(Ile). As IleRS can inadvertently accommodate and process structurally similar amino acids such as valine, to avoid such errors it has two additional distinct tRNA(Ile)-dependent editing activities. One activity is designated as 'pretransfer' editing and involves the hydrolysis of activated Val-AMP. The other activity is designated 'posttransfer' editing and involves deacylation of mischarged Val-tRNA(Ile). This chain is Isoleucine--tRNA ligase, found in Listeria monocytogenes serotype 4b (strain F2365).